The primary structure comprises 189 residues: Transmembrane protein 229b (189 aa).

The Cytoplasmic segment spans residues 1–17 (MATTVTPEPLTALSRWY). The helical transmembrane segment at 18–38 (LYAIHGYFCEVMFTAAWEFVV) threads the bilayer. Residues 39 to 43 (NCNWK) are Extracellular-facing. Residues 44-64 (FPGVTSVWALFIYGTCILIVE) traverse the membrane as a helical segment. The Cytoplasmic portion of the chain corresponds to 65–75 (RMYLCLKDRCN). Residues 76–96 (VLLRCIIYTLWTYFWEFGTGF) traverse the membrane as a helical segment. Residues 97–114 (LLRQFNACPWDYSEFKYN) lie on the Extracellular side of the membrane. Residues 115 to 135 (FMGLITAEYAVPWFCASFIVE) traverse the membrane as a helical segment. Residues 136 to 189 (RLVIRNTLRLRFDEVAESGQAEERLDRGGGGRGGRRGRGARAGATSANGYVKVD) are Cytoplasmic-facing. The segment at 158 to 189 (ERLDRGGGGRGGRRGRGARAGATSANGYVKVD) is disordered.

The protein belongs to the TMEM229 family.

The protein resides in the membrane. This Danio rerio (Zebrafish) protein is Transmembrane protein 229b (tmem229b).